The sequence spans 367 residues: Peptide chain release factor 2 (367 aa).

Residue Q250 is modified to N5-methylglutamine.

The protein belongs to the prokaryotic/mitochondrial release factor family. Methylated by PrmC. Methylation increases the termination efficiency of RF2.

The protein localises to the cytoplasm. In terms of biological role, peptide chain release factor 2 directs the termination of translation in response to the peptide chain termination codons UGA and UAA. The chain is Peptide chain release factor 2 from Chloroflexus aggregans (strain MD-66 / DSM 9485).